Reading from the N-terminus, the 546-residue chain is Chaperonin GroEL (546 aa).

Residues 30–33 (TLGP), Lys51, 87–91 (DGTTT), Gly415, 479–481 (NAA), and Asp495 each bind ATP. Residues 525–546 (PEPKKDMPPMPGGGMGGMGGMY) form a disordered region. Residues 536–546 (GGGMGGMGGMY) are compositionally biased toward gly residues.

The protein belongs to the chaperonin (HSP60) family. In terms of assembly, forms a cylinder of 14 subunits composed of two heptameric rings stacked back-to-back. Interacts with the co-chaperonin GroES.

Its subcellular location is the cytoplasm. It carries out the reaction ATP + H2O + a folded polypeptide = ADP + phosphate + an unfolded polypeptide.. Its function is as follows. Together with its co-chaperonin GroES, plays an essential role in assisting protein folding. The GroEL-GroES system forms a nano-cage that allows encapsulation of the non-native substrate proteins and provides a physical environment optimized to promote and accelerate protein folding. The chain is Chaperonin GroEL from Solidesulfovibrio magneticus (strain ATCC 700980 / DSM 13731 / RS-1) (Desulfovibrio magneticus).